A 604-amino-acid polypeptide reads, in one-letter code: M-phase inducer phosphatase cdc-25.1 (604 aa).

2 disordered regions span residues 33–67 (PKTLFEEDGSSRDSGVSMTSCSDKSDASPEEDVDF) and 127–188 (EKRV…PFGD). Residues 44–54 (RDSGVSMTSCS) show a composition bias toward polar residues. Residues 127-138 (EKRVMSERPTDN) show a composition bias toward basic and acidic residues. Residues 305-413 (FDKKYIIVDC…LWSTAECRQI (109 aa)) enclose the Rhodanese domain. Disordered stretches follow at residues 443-464 (ASLKPNGETSHREEKKKRCTRS) and 562-588 (DFPDRPSESSSTTPAGEHLPLGEGGHQ).

The protein belongs to the MPI phosphatase family.

The enzyme catalyses O-phospho-L-tyrosyl-[protein] + H2O = L-tyrosyl-[protein] + phosphate. This chain is M-phase inducer phosphatase cdc-25.1 (cdc-25.1), found in Caenorhabditis elegans.